Consider the following 458-residue polypeptide: Cysteine--tRNA ligase (458 aa).

Residue Cys-33 coordinates Zn(2+). Residues Pro-35–Asn-45 carry the 'HIGH' region motif. Zn(2+)-binding residues include Cys-221, His-246, and Glu-250. The 'KMSKS' region motif lies at Lys-279–Ser-283. Position 282 (Lys-282) interacts with ATP.

The protein belongs to the class-I aminoacyl-tRNA synthetase family. Monomer. Zn(2+) serves as cofactor.

It is found in the cytoplasm. The catalysed reaction is tRNA(Cys) + L-cysteine + ATP = L-cysteinyl-tRNA(Cys) + AMP + diphosphate. This Rhizobium etli (strain ATCC 51251 / DSM 11541 / JCM 21823 / NBRC 15573 / CFN 42) protein is Cysteine--tRNA ligase.